Here is a 532-residue protein sequence, read N- to C-terminus: L-proline--[L-prolyl-carrier protein] ligase (532 aa).

Positions 510–532 (KTDYRRLGLDAPPRPAAPLGTAR) are disordered.

The protein belongs to the ATP-dependent AMP-binding enzyme family.

The enzyme catalyses holo-[peptidyl-carrier protein] + L-proline + ATP = L-prolyl-[peptidyl-carrier protein] + AMP + diphosphate. Functionally, involved in the biosynthesis of undecylprodigiosin. Catalyzes the conversion of L-proline to L-prolyl-AMP and the transfer of the L-prolyl group to acyl carrier protein RedO. The sequence is that of L-proline--[L-prolyl-carrier protein] ligase from Streptomyces coelicolor (strain ATCC BAA-471 / A3(2) / M145).